The chain runs to 37 residues: MSGIVKSIILSGPSGLGKTAIAKRLWEYIWICGVPYH.

This sequence belongs to the poxviridae A56.5 protein family.

This is an uncharacterized protein from Vaccinia virus (strain Western Reserve) (VACV).